Here is a 37-residue protein sequence, read N- to C-terminus: Large ribosomal subunit protein bL36 (37 aa).

It belongs to the bacterial ribosomal protein bL36 family.

This chain is Large ribosomal subunit protein bL36, found in Nostoc punctiforme (strain ATCC 29133 / PCC 73102).